Here is a 260-residue protein sequence, read N- to C-terminus: Proteasome assembly chaperone 2 (260 aa).

This sequence belongs to the PSMG2 family. Forms a heterodimer with psmg1. In terms of processing, degraded by the proteasome upon completion of 20S proteasome maturation.

Its subcellular location is the nucleus. Its function is as follows. Chaperone protein which promotes assembly of the 20S proteasome as part of a heterodimer with psmg1. This Danio rerio (Zebrafish) protein is Proteasome assembly chaperone 2.